A 109-amino-acid polypeptide reads, in one-letter code: Cytochrome bo(3) ubiquinol oxidase subunit 4 (109 aa).

Over 1-17 (MSHSTDHSGASHGSVKT) the chain is Cytoplasmic. The chain crosses the membrane as a helical span at residues 18–36 (YMTGFILSIILTVIPFWMV). Over 37–45 (MTGAASPAV) the chain is Periplasmic. Residues 46–64 (ILGTILAMAVVQVLVHLVC) form a helical membrane-spanning segment. The Cytoplasmic segment spans residues 65 to 80 (FLHMNTKSDEGWNMTA). Residues 81–99 (FVFTVLIIAILVVGSIWIM) form a helical membrane-spanning segment. The Periplasmic portion of the chain corresponds to 100 to 109 (WNLNYNMMMH).

The protein belongs to the cytochrome c oxidase bacterial subunit 4 family. In terms of assembly, heterooctamer of two A chains, two B chains, two C chains and two D chains.

It is found in the cell inner membrane. Its function is as follows. Cytochrome bo(3) ubiquinol terminal oxidase is the component of the aerobic respiratory chain of E.coli that predominates when cells are grown at high aeration. Has proton pump activity across the membrane in addition to electron transfer, pumping 2 protons/electron. This is Cytochrome bo(3) ubiquinol oxidase subunit 4 (cyoD) from Escherichia coli O157:H7.